A 334-amino-acid polypeptide reads, in one-letter code: MLKTTIIGASGYTGAELAFMVNKHPQLTLSGLYVSANSVDAGKTIAQLHGKLANVVDMVVNALTDPKQVAQDSDVVFLATAHEVSHDLAPIFLEAGCQVFDLSGAFRVKSDGFYDTFYGFEHQFNNWLDKAAYGLAEWNQEEIKNAPLVAVAGCYPTASQLAIKPLLVDGLLDTQQWPVINATSGVSGAGRKASMTNSFCEVSLQPYGVFNHRHQPEIAQHLGCDVIFTPHLGNFKRGILATVTMKLAQGVTEQQVAQAFEQAYQGKPAVRLKGDGIPRIQDVENTPFCDIGWKVQGEHIIVISAIDNLLKGASSQAMQCLNIHYGYPELTALL.

Residue Cys-154 is part of the active site.

This sequence belongs to the NAGSA dehydrogenase family. Type 1 subfamily.

It localises to the cytoplasm. It catalyses the reaction N-acetyl-L-glutamate 5-semialdehyde + phosphate + NADP(+) = N-acetyl-L-glutamyl 5-phosphate + NADPH + H(+). It participates in amino-acid biosynthesis; L-arginine biosynthesis; N(2)-acetyl-L-ornithine from L-glutamate: step 3/4. In terms of biological role, catalyzes the NADPH-dependent reduction of N-acetyl-5-glutamyl phosphate to yield N-acetyl-L-glutamate 5-semialdehyde. This chain is N-acetyl-gamma-glutamyl-phosphate reductase, found in Vibrio parahaemolyticus serotype O3:K6 (strain RIMD 2210633).